A 37-amino-acid chain; its full sequence is Cytochrome b6-f complex subunit 5 (37 aa).

The helical transmembrane segment at 5–25 threads the bilayer; that stretch reads SLFGIVLGLIPITLAGLFVTA.

The protein belongs to the PetG family. As to quaternary structure, the 4 large subunits of the cytochrome b6-f complex are cytochrome b6, subunit IV (17 kDa polypeptide, PetD), cytochrome f and the Rieske protein, while the 4 small subunits are PetG, PetL, PetM and PetN. The complex functions as a dimer.

It localises to the plastid. The protein localises to the chloroplast thylakoid membrane. Functionally, component of the cytochrome b6-f complex, which mediates electron transfer between photosystem II (PSII) and photosystem I (PSI), cyclic electron flow around PSI, and state transitions. PetG is required for either the stability or assembly of the cytochrome b6-f complex. The protein is Cytochrome b6-f complex subunit 5 of Arabis hirsuta (Hairy rock-cress).